Here is a 357-residue protein sequence, read N- to C-terminus: MTAYRGKYADELIANASYIATPGKVILAADESTGTIGKRFPSINVENVESNRRALRELLFTTPGALPYLSGVILFEETLYQKTADGKPFVDAMKDGGVLPGIKVDKGTVELAGTNGETTTQGLDGLAQRCAQYYTAGARFAKWRAVLKIGPTEPSPLAILENANGLARYGIICQENGLVPIVEPEILVDGTHDIDRCAEVSERVLAACYKALNDHHVLLEGTSLKPNIVTPGSESKKVTPEVIAEYTVRTLQRTVPQAVPGVMFLSGGQSEEEATLNLNAMNKLETKKPWTLSFSYGRALQQSTLKAWQGKEENVAKAQEVFLARAKGNSEATLGKYQGGAGGADASESLHVKDYKY.

Substrate is bound by residues Arg-53 and Lys-142. Catalysis depends on Glu-183, which acts as the Proton acceptor. Lys-225 (schiff-base intermediate with dihydroxyacetone-P) is an active-site residue.

The protein belongs to the class I fructose-bisphosphate aldolase family.

It localises to the cytoplasm. The catalysed reaction is beta-D-fructose 1,6-bisphosphate = D-glyceraldehyde 3-phosphate + dihydroxyacetone phosphate. It functions in the pathway carbohydrate degradation; glycolysis; D-glyceraldehyde 3-phosphate and glycerone phosphate from D-glucose: step 4/4. This is Fructose-bisphosphate aldolase, cytoplasmic isozyme from Spinacia oleracea (Spinach).